The sequence spans 339 residues: Endospore coat-associated protein YutH (339 aa).

It belongs to the CotS family.

Its subcellular location is the forespore outer membrane. It is found in the spore coat. Its function is as follows. Involved in sporulation. The chain is Endospore coat-associated protein YutH (yutH) from Bacillus subtilis (strain 168).